The chain runs to 342 residues: Nicotinate-nucleotide--dimethylbenzimidazole phosphoribosyltransferase (342 aa).

Catalysis depends on E311, which acts as the Proton acceptor.

It belongs to the CobT family.

The catalysed reaction is 5,6-dimethylbenzimidazole + nicotinate beta-D-ribonucleotide = alpha-ribazole 5'-phosphate + nicotinate + H(+). It functions in the pathway nucleoside biosynthesis; alpha-ribazole biosynthesis; alpha-ribazole from 5,6-dimethylbenzimidazole: step 1/2. Functionally, catalyzes the synthesis of alpha-ribazole-5'-phosphate from nicotinate mononucleotide (NAMN) and 5,6-dimethylbenzimidazole (DMB). This Shewanella piezotolerans (strain WP3 / JCM 13877) protein is Nicotinate-nucleotide--dimethylbenzimidazole phosphoribosyltransferase.